Here is a 218-residue protein sequence, read N- to C-terminus: MKFVAFERAKQGTGASRRLRITGRTPGIVYGGTAEPILIEIDHNALWHAIKKEAFHGSILEMELGGTEHKVLLRDLQMHPYKQQVQHIDFQRVEARTRMTVKVPVHFSGEEESPAVKTENCLVTHVLTEMTVSCFPADIPDFIAVDLGGLTKGKSLHVKDIVLPKRVKAAVKGQVNPVMVSVTPIVEEVVEVAPVVVDPKAAKGKAGAKPAAKPAAKK.

This sequence belongs to the bacterial ribosomal protein bL25 family. CTC subfamily. Part of the 50S ribosomal subunit; part of the 5S rRNA/L5/L18/L25 subcomplex. Contacts the 5S rRNA. Binds to the 5S rRNA independently of L5 and L18.

Its function is as follows. This is one of the proteins that binds to the 5S RNA in the ribosome where it forms part of the central protuberance. This Polaromonas naphthalenivorans (strain CJ2) protein is Large ribosomal subunit protein bL25.